A 243-amino-acid chain; its full sequence is Probable septum site-determining protein MinC (243 aa).

It belongs to the MinC family. In terms of assembly, interacts with MinD and FtsZ.

In terms of biological role, cell division inhibitor that blocks the formation of polar Z ring septums. Rapidly oscillates between the poles of the cell to destabilize FtsZ filaments that have formed before they mature into polar Z rings. Prevents FtsZ polymerization. This chain is Probable septum site-determining protein MinC, found in Wigglesworthia glossinidia brevipalpis.